A 195-amino-acid chain; its full sequence is ATP-dependent Clp protease proteolytic subunit (195 aa).

Serine 101 functions as the Nucleophile in the catalytic mechanism. Residue histidine 126 is part of the active site.

This sequence belongs to the peptidase S14 family. Component of the chloroplastic Clp protease core complex.

It localises to the plastid. The protein localises to the chloroplast stroma. It carries out the reaction Hydrolysis of proteins to small peptides in the presence of ATP and magnesium. alpha-casein is the usual test substrate. In the absence of ATP, only oligopeptides shorter than five residues are hydrolyzed (such as succinyl-Leu-Tyr-|-NHMec, and Leu-Tyr-Leu-|-Tyr-Trp, in which cleavage of the -Tyr-|-Leu- and -Tyr-|-Trp bonds also occurs).. Its function is as follows. Cleaves peptides in various proteins in a process that requires ATP hydrolysis. Has a chymotrypsin-like activity. Plays a major role in the degradation of misfolded proteins. The chain is ATP-dependent Clp protease proteolytic subunit from Oltmannsiellopsis viridis (Marine flagellate).